Consider the following 194-residue polypeptide: Peptidyl-tRNA hydrolase (194 aa).

Residue Tyr-17 participates in tRNA binding. Residue His-22 is the Proton acceptor of the active site. Residues Tyr-68, Asn-70, and Asn-116 each coordinate tRNA.

Belongs to the PTH family. In terms of assembly, monomer.

The protein resides in the cytoplasm. The catalysed reaction is an N-acyl-L-alpha-aminoacyl-tRNA + H2O = an N-acyl-L-amino acid + a tRNA + H(+). In terms of biological role, hydrolyzes ribosome-free peptidyl-tRNAs (with 1 or more amino acids incorporated), which drop off the ribosome during protein synthesis, or as a result of ribosome stalling. Catalyzes the release of premature peptidyl moieties from peptidyl-tRNA molecules trapped in stalled 50S ribosomal subunits, and thus maintains levels of free tRNAs and 50S ribosomes. This Azotobacter vinelandii (strain DJ / ATCC BAA-1303) protein is Peptidyl-tRNA hydrolase.